The chain runs to 878 residues: DNA mismatch repair protein MutS (878 aa).

618 to 625 is a binding site for ATP; sequence GPNMGGKS. 2 stretches are compositionally biased toward basic and acidic residues: residues 800 to 811 and 863 to 878; these read LEEESSRQRAEP and GADK…ARSR. Disordered regions lie at residues 800-842 and 859-878; these read LEEE…PDEL and SGEE…ARSR.

It belongs to the DNA mismatch repair MutS family.

Functionally, this protein is involved in the repair of mismatches in DNA. It is possible that it carries out the mismatch recognition step. This protein has a weak ATPase activity. This is DNA mismatch repair protein MutS from Alkalilimnicola ehrlichii (strain ATCC BAA-1101 / DSM 17681 / MLHE-1).